A 454-amino-acid polypeptide reads, in one-letter code: tRNA modification GTPase MnmE (454 aa).

(6S)-5-formyl-5,6,7,8-tetrahydrofolate contacts are provided by arginine 23, glutamate 80, and lysine 120. Residues 216-377 enclose the TrmE-type G domain; sequence GMKVVIAGRP…LRNHLKQSMG (162 aa). Asparagine 226 contacts K(+). GTP-binding positions include 226–231, 245–251, 270–273, 335–338, and 358–360; these read NAGKSS, TDIAGTT, DTAG, NKAD, and SAR. Serine 230 is a Mg(2+) binding site. K(+)-binding residues include threonine 245, isoleucine 247, and threonine 250. Threonine 251 lines the Mg(2+) pocket. Lysine 454 is a binding site for (6S)-5-formyl-5,6,7,8-tetrahydrofolate.

This sequence belongs to the TRAFAC class TrmE-Era-EngA-EngB-Septin-like GTPase superfamily. TrmE GTPase family. In terms of assembly, homodimer. Heterotetramer of two MnmE and two MnmG subunits. The cofactor is K(+).

It is found in the cytoplasm. Exhibits a very high intrinsic GTPase hydrolysis rate. Involved in the addition of a carboxymethylaminomethyl (cmnm) group at the wobble position (U34) of certain tRNAs, forming tRNA-cmnm(5)s(2)U34. The protein is tRNA modification GTPase MnmE of Escherichia coli O6:K15:H31 (strain 536 / UPEC).